The chain runs to 932 residues: RNA-binding protein 12 (932 aa).

Positions D96 to R116 are disordered. A compositionally biased stretch (low complexity) spans P98 to R116. The RRM 1 domain occupies L304–E379. Phosphoserine occurs at positions 352 and 375. 2 stretches are compositionally biased toward polar residues: residues K392–T401 and L408–Q417. The disordered stretch occupies residues K392–S424. A phosphoserine mark is found at S420, S422, and S424. The RRM 2 domain maps to F430 to K507. Phosphoserine is present on S525. Residues N717–G734 show a composition bias toward low complexity. The tract at residues N717 to P853 is disordered. Residues S783–G811 are compositionally biased toward gly residues. The span at A824–G836 shows a compositional bias: pro residues. Residues T856–G932 enclose the RRM 3 domain.

It localises to the nucleus. In Homo sapiens (Human), this protein is RNA-binding protein 12 (RBM12).